The chain runs to 376 residues: MIEQSLSKPSFSLSIPIPQPPKSKSSFLCSYSKIRCESVDYPSSSKIDAKHPQISSINSNGGGKMGSYTGRDPNVKKPEWLRQKAPQGERYDEVKESLSRLKLNTVCQEAQCPNIGECWNGGGDGIATATIMVLGDTCTRGCRFCAVKTSRNPPPPDPMEPLNTALAIASWGVDYIVITSVDRDDLPDGGSGHFAQTVRAMKELKPEIMVECLTSDFRGDLKAVDTLVHSGLDVFAHNVETVKRLQRIVRDPRAGYEQSLSVLKHAKISKKGMITKTSIMLGLGESDNEVKEAMADLRAIGVDILTFGQYLQPTPLHLTVKEYVTPEKFAFWKEYGESIGFRYVASGPLVRSSYRAGELFVKTMVKESVKEAAAIS.

The segment covering 1 to 13 (MIEQSLSKPSFSL) has biased composition (polar residues). Disordered regions lie at residues 1–25 (MIEQ…KSKS) and 47–75 (IDAK…DPNV). Residues 1-35 (MIEQSLSKPSFSLSIPIPQPPKSKSSFLCSYSKIR) constitute a chloroplast transit peptide. The [4Fe-4S] cluster site is built by cysteine 107, cysteine 112, cysteine 118, cysteine 138, cysteine 142, cysteine 145, and serine 353. Positions 121-342 (GGGDGIATAT…KEYGESIGFR (222 aa)) constitute a Radical SAM core domain.

Belongs to the radical SAM superfamily. Lipoyl synthase family. Requires [4Fe-4S] cluster as cofactor.

Its subcellular location is the plastid. The protein localises to the chloroplast. The catalysed reaction is [[Fe-S] cluster scaffold protein carrying a second [4Fe-4S](2+) cluster] + N(6)-octanoyl-L-lysyl-[protein] + 2 oxidized [2Fe-2S]-[ferredoxin] + 2 S-adenosyl-L-methionine + 4 H(+) = [[Fe-S] cluster scaffold protein] + N(6)-[(R)-dihydrolipoyl]-L-lysyl-[protein] + 4 Fe(3+) + 2 hydrogen sulfide + 2 5'-deoxyadenosine + 2 L-methionine + 2 reduced [2Fe-2S]-[ferredoxin]. It functions in the pathway protein modification; protein lipoylation via endogenous pathway; protein N(6)-(lipoyl)lysine from octanoyl-[acyl-carrier-protein]: step 2/2. Functionally, catalyzes the radical-mediated insertion of two sulfur atoms into the C-6 and C-8 positions of the octanoyl moiety bound to the lipoyl domains of lipoate-dependent enzymes, thereby converting the octanoylated domains into lipoylated derivatives. This chain is Lipoyl synthase 1, chloroplastic, found in Populus trichocarpa (Western balsam poplar).